A 627-amino-acid polypeptide reads, in one-letter code: Lactose permease (627 aa).

Positions 1 to 460 (MKKKLVSRLS…AEIVDQLETQ (460 aa)) are permease. Transmembrane regions (helical) follow at residues 13 to 33 (AGAF…IVFV), 46 to 66 (IFII…LDPL), 84 to 104 (WVVG…TDFG), 111 to 131 (PVVY…FYSF), 159 to 179 (VGST…ILFF), 193 to 213 (WFFF…TVGL), 244 to 264 (LLWL…LNAL), 281 to 301 (LLYT…PSLA), 309 to 329 (LFYA…VASG), 336 to 356 (VGAE…LMII), 392 to 412 (WFVS…ASTI), and 419 to 439 (VFKL…VSIF). Residues 493–597 (DPVFADKKLG…DDTVIVTVIN (105 aa)) form the PTS EIIA type-1 domain. A Phosphohistidine; by HPr modification is found at histidine 545.

It in the N-terminal section; belongs to the sodium:galactoside symporter (TC 2.A.2) family.

The protein localises to the cell membrane. In terms of biological role, responsible for transport of beta-galactosides into the cell, with the concomitant uptake of protons (symport system), and also for transport of homologous and heterologous exchange of beta-galactosides. In Lactobacillus delbrueckii subsp. bulgaricus (strain ATCC 11842 / DSM 20081 / BCRC 10696 / JCM 1002 / NBRC 13953 / NCIMB 11778 / NCTC 12712 / WDCM 00102 / Lb 14), this protein is Lactose permease (lacY).